The chain runs to 159 residues: Small ribosomal subunit protein uS7m (159 aa).

This sequence belongs to the universal ribosomal protein uS7 family. Part of the small ribosomal subunit.

It localises to the mitochondrion. Functionally, one of the primary rRNA binding proteins, it binds directly to the small rRNA where it nucleates assembly of the head domain of the small subunit. This Reclinomonas americana protein is Small ribosomal subunit protein uS7m (RPS7).